The chain runs to 510 residues: GMP synthase [glutamine-hydrolyzing] (510 aa).

In terms of domain architecture, Glutamine amidotransferase type-1 spans 5-195 (LVLVVDFGGQ…LFNVCNLKGD (191 aa)). Cys-82 functions as the Nucleophile in the catalytic mechanism. Residues His-169 and Glu-171 contribute to the active site. One can recognise a GMPS ATP-PPase domain in the interval 196-385 (WSMSSFAEQQ…LGIPHKLVWR (190 aa)). 223–229 (SGGVDSS) contributes to the ATP binding site.

As to quaternary structure, homodimer.

It carries out the reaction XMP + L-glutamine + ATP + H2O = GMP + L-glutamate + AMP + diphosphate + 2 H(+). The protein operates within purine metabolism; GMP biosynthesis; GMP from XMP (L-Gln route): step 1/1. In terms of biological role, catalyzes the synthesis of GMP from XMP. The chain is GMP synthase [glutamine-hydrolyzing] from Clostridium botulinum (strain Okra / Type B1).